The sequence spans 166 residues: Shikimate kinase (166 aa).

Residue 11-16 (GSGKST) coordinates ATP. Position 15 (S15) interacts with Mg(2+). 3 residues coordinate substrate: D33, R57, and G79. Position 117 (R117) interacts with ATP. R134 serves as a coordination point for substrate.

It belongs to the shikimate kinase family. Monomer. The cofactor is Mg(2+).

It localises to the cytoplasm. The catalysed reaction is shikimate + ATP = 3-phosphoshikimate + ADP + H(+). It participates in metabolic intermediate biosynthesis; chorismate biosynthesis; chorismate from D-erythrose 4-phosphate and phosphoenolpyruvate: step 5/7. Its function is as follows. Catalyzes the specific phosphorylation of the 3-hydroxyl group of shikimic acid using ATP as a cosubstrate. This is Shikimate kinase from Sulfurihydrogenibium sp. (strain YO3AOP1).